Here is a 206-residue protein sequence, read N- to C-terminus: LexA repressor (206 aa).

A DNA-binding region (H-T-H motif) is located at residues 28–48; that stretch reads RAEIARRLGFKSANAAEEHLK. Catalysis depends on for autocatalytic cleavage activity residues Ser-123 and Lys-160.

Belongs to the peptidase S24 family. In terms of assembly, homodimer.

It catalyses the reaction Hydrolysis of Ala-|-Gly bond in repressor LexA.. Represses a number of genes involved in the response to DNA damage (SOS response), including recA and lexA. In the presence of single-stranded DNA, RecA interacts with LexA causing an autocatalytic cleavage which disrupts the DNA-binding part of LexA, leading to derepression of the SOS regulon and eventually DNA repair. The sequence is that of LexA repressor from Shewanella pealeana (strain ATCC 700345 / ANG-SQ1).